The primary structure comprises 496 residues: Probable 26S proteasome non-ATPase regulatory subunit 3 (496 aa).

The 180-residue stretch at 249-428 (ARFLYYLGRI…GYMRSKESTD (180 aa)) folds into the PCI domain. The segment at 458–480 (RYPPKSYGKELESAEERREREQQ) is disordered. Residues 464–480 (YGKELESAEERREREQQ) show a composition bias toward basic and acidic residues.

Belongs to the proteasome subunit S3 family. In terms of assembly, the 26S proteasome is composed of a core protease, known as the 20S proteasome, capped at one or both ends by the 19S regulatory complex (RC). The RC is composed of at least 18 different subunits in two subcomplexes, the base and the lid, which form the portions proximal and distal to the 20S proteolytic core, respectively.

Its function is as follows. Acts as a regulatory subunit of the 26 proteasome which is involved in the ATP-dependent degradation of ubiquitinated proteins. The polypeptide is Probable 26S proteasome non-ATPase regulatory subunit 3 (Dox-A2) (Anopheles gambiae (African malaria mosquito)).